The following is a 295-amino-acid chain: Protein NEOXANTHIN-DEFICIENT 1 (295 aa).

The interval 221–251 (PAKVSGPSESDADKENSSEDQSSNVESVSRV) is disordered.

Required for neoxanthin biosynthesis. Probably not involved directly in the enzymatic conversion of violaxanthin to neoxanthin. Is necessary but not sufficient for neoxanthin synthesis. Seems not required for abscisic acid (ABA) biosynthesis in response to drought stress. The sequence is that of Protein NEOXANTHIN-DEFICIENT 1 from Solanum lycopersicum (Tomato).